The following is a 190-amino-acid chain: Guanylate kinase (190 aa).

The region spanning 3-185 is the Guanylate kinase-like domain; it reads NYIFIISAPS…SLEQLCKYFE (183 aa). An ATP-binding site is contributed by 10–17; the sequence is APSGAGKS.

Belongs to the guanylate kinase family.

It localises to the cytoplasm. The enzyme catalyses GMP + ATP = GDP + ADP. Essential for recycling GMP and indirectly, cGMP. In Francisella tularensis subsp. holarctica (strain LVS), this protein is Guanylate kinase.